Reading from the N-terminus, the 432-residue chain is Trigger factor (432 aa).

Residues 161–246 (EDRVTIDFTG…LKKVEERELP (86 aa)) enclose the PPIase FKBP-type domain.

It belongs to the FKBP-type PPIase family. Tig subfamily.

Its subcellular location is the cytoplasm. It carries out the reaction [protein]-peptidylproline (omega=180) = [protein]-peptidylproline (omega=0). Its function is as follows. Involved in protein export. Acts as a chaperone by maintaining the newly synthesized protein in an open conformation. Functions as a peptidyl-prolyl cis-trans isomerase. This Cronobacter sakazakii (strain ATCC BAA-894) (Enterobacter sakazakii) protein is Trigger factor.